We begin with the raw amino-acid sequence, 131 residues long: Ribosome-binding factor A (131 aa).

Belongs to the RbfA family. In terms of assembly, monomer. Binds 30S ribosomal subunits, but not 50S ribosomal subunits or 70S ribosomes.

The protein resides in the cytoplasm. Functionally, one of several proteins that assist in the late maturation steps of the functional core of the 30S ribosomal subunit. Associates with free 30S ribosomal subunits (but not with 30S subunits that are part of 70S ribosomes or polysomes). Required for efficient processing of 16S rRNA. May interact with the 5'-terminal helix region of 16S rRNA. The polypeptide is Ribosome-binding factor A (Mannheimia succiniciproducens (strain KCTC 0769BP / MBEL55E)).